Consider the following 888-residue polypeptide: MSTKGLKEEIDDVPSVDPVVSETVNSALEQLQLDDPEENATSNAFANKVSQDSQFANGPPSQMFPHPQMMGGMGFMPYSQMMQVPHNPCPFFPPPDFNDPTAPLSSSPLNAGGPPMLFKNDSLPFQMLSSGAAVATQGGQNLNPLINDNSMKVLPIASADPLWTHSNVPGSASVAIEETTATLQESLPSKGRESNNKASSFRRQTFHALSPTDLINAANNVTLSKDFQSDMQNFSKAKKPSVGANNTAKTRTQSISFDNTPSSTSFIPPTNSVSEKLSDFKIETSKEDLINKTAPAKKESPTTYGAAYPYGGPLLQPNPIMPGHPHNISSPIYGIRSPFPNSYEMGAQFQPFSPILNPTSHSLNANSPIPLTQSPIHLAPVLNPSSNSVAFSDMKNDGGKPTTDNDKAGPNVRMDLINPNLGPSMQPFHILPPQQNTPPPPWLYSTPPPFNAMVPPHLLAQNHMPLMNSANNKHHGRNNNSMSSHNDNDNIGNSNYNNKDTGRSNVGKMKNMKNSYHGYYNNNNNNNNNNNNNNNSNATNSNSAEKQRKIEESSRFADAVLDQYIGSIHSLCKDQHGCRFLQKQLDILGSKAADAIFEETKDYTVELMTDSFGNYLIQKLLEEVTTEQRIVLTKISSPHFVEISLNPHGTRALQKLIECIKTDEEAQIVVDSLRPYTVQLSKDLNGNHVIQKCLQRLKPENFQFIFDAISDSCIDIATHRHGCCVLQRCLDHGTTEQCDNLCDKLLALVDKLTLDPFGNYVVQYIITKEAEKNKYDYTHKIVHLLKPRAIELSIHKFGSNVIEKILKTAIVSEPMILEILNNGGETGIQSLLNDSYGNYVLQTALDISHKQNDYLYKRLSEIVAPLLVGPIRNTPHGKRIIGMLHLDS.

A phosphothreonine mark is found at Thr205, Thr212, and Thr252. Disordered stretches follow at residues 236–270 (KAKK…IPPT) and 467–551 (MNSA…RKIE). Polar residues predominate over residues 243–270 (GANNTAKTRTQSISFDNTPSSTSFIPPT). Ser256 is subject to Phosphoserine. 2 stretches are compositionally biased toward low complexity: residues 478 to 499 (NNNS…YNNK) and 521 to 543 (NNNN…NSNS). Residues 539-888 (TNSNSAEKQR…RIIGMLHLDS (350 aa)) form the PUM-HD domain. Pumilio repeat units lie at residues 563 to 598 (QYIG…AIFE), 599 to 634 (ETKD…VLTK), 635 to 671 (ISSP…IVVD), 672 to 707 (SLRP…FIFD), 708 to 743 (AISD…NLCD), 744 to 783 (KLLA…KIVH), 784 to 821 (LLKP…EILN), and 823 to 861 (GGET…RLSE).

In terms of biological role, is not essential for haploid growth, but may affect diploid formation. The chain is Pumilio homology domain family member 4 (PUF4) from Saccharomyces cerevisiae (strain ATCC 204508 / S288c) (Baker's yeast).